A 128-amino-acid chain; its full sequence is Large ribosomal subunit protein bL19 (128 aa).

Belongs to the bacterial ribosomal protein bL19 family.

This protein is located at the 30S-50S ribosomal subunit interface and may play a role in the structure and function of the aminoacyl-tRNA binding site. The protein is Large ribosomal subunit protein bL19 of Ralstonia nicotianae (strain ATCC BAA-1114 / GMI1000) (Ralstonia solanacearum).